Reading from the N-terminus, the 22-residue chain is Leptoglycin (22 aa).

The tract at residues 1-22 (GLLGGLLGPLLGGGGGGGGGLL) is disordered.

In terms of tissue distribution, expressed by the skin glands.

The protein localises to the secreted. Its function is as follows. Antimicrobial protein. Has antibacterial activity against the Gram-negative bacteria E.coli ATCC 28922 (MIC=50 uM), P.aeruginosa ATCC 9027 (MIC=8 uM) and C.freundii ATCC 8090 (MIC=75 uM). Does not have hemolytic activity. This is Leptoglycin from Leptodactylus pentadactylus (Smokey jungle frog).